The primary structure comprises 244 residues: Claudin-12 (244 aa).

At 1-10 (MGCRDVHAAT) the chain is on the cytoplasmic side. Residues 11–31 (VLSFLCGIASVAGLFAGTLLP) traverse the membrane as a helical segment. Over 32 to 87 (NWRKLRLITFNRNEKNLTVYTGLWVKCARYDGSSDCLMYDTTWYSSVDQLDLRVLQ) the chain is Extracellular. The helical transmembrane segment at 88–108 (FALPLSMLIAMGALLLCLIGM) threads the bilayer. Residues 109–135 (CNTAFRSSVPNIKLAKCLVNSAGCHLV) lie on the Cytoplasmic side of the membrane. Residues 136–156 (AGLLFFLAGTVSLSPSIWVIF) form a helical membrane-spanning segment. The Extracellular portion of the chain corresponds to 157–174 (YNIHLNKKFEPVFSFDYA). Residues 175-195 (VYVTIASAGGLFMTSLILFIW) traverse the membrane as a helical segment. The Cytoplasmic segment spans residues 196 to 244 (YCTCKSLPSPFWQPLYSHPPSMHTYSQPYSARSRLSAIEIDIPVVSHTT). Phosphoserine occurs at positions 228 and 231.

The protein belongs to the claudin family. In terms of assembly, interacts with OCLN.

Its subcellular location is the cell junction. The protein localises to the tight junction. It is found in the cell membrane. In terms of biological role, plays a major role in tight junction-specific obliteration of the intercellular space, through calcium-independent cell-adhesion activity. This is Claudin-12 (CLDN12) from Pongo abelii (Sumatran orangutan).